A 637-amino-acid polypeptide reads, in one-letter code: Protein arginine N-methyltransferase 5 (637 aa).

Residue Ala2 is modified to N-acetylalanine. The segment at 13-292 (RVSSGRDLNC…YLEYLSQNRP (280 aa)) is TIM barrel. The region spanning 308 to 615 (LQSPLQPLMD…SNSKKVWYEW (308 aa)) is the SAM-dependent MTase PRMT-type domain. Tyr324 serves as a coordination point for S-adenosyl-L-methionine. Phe327 is an a protein binding site. S-adenosyl-L-methionine contacts are provided by residues 333-334 (KY), Glu392, and 419-420 (DM). A protein contacts are provided by Glu435 and Glu444. Residues Glu435 and Glu444 each act as proton donor/acceptor in the active site. Residues 465–637 (PGEYTSFLAP…PTGRSYTIGL (173 aa)) form a beta barrel region. The interval 488-494 (REKDRDP) is dimerization.

It belongs to the class I-like SAM-binding methyltransferase superfamily. Protein arginine N-methyltransferase family. Forms, at least, homodimers and homotetramers. Component of the methylosome complex, composed of PRMT5, WDR77 and CLNS1A. Found in a complex composed of PRMT5, WDR77 and RIOK1. RIOK1 and CLNS1A associate with PRMT5 in a mutually exclusive fashion, which allows the recruitment of distinct methylation substrates, such as nucleolin/NCL and Sm proteins, respectively. Interacts with PRDM1. Identified in a complex composed of methylosome and PRMT1 and ERH. Interacts with EGFR; methylates EGFR and stimulates EGFR-mediated ERK activation. Interacts with HOXA9. Interacts with SRGAP2. Found in a complex with COPRS, RUNX1 and CBFB. Interacts with CHTOP; the interaction symmetrically methylates CHTOP, but seems to require the presence of PRMT1. Interacts with EPB41L3; this modulates methylation of target proteins. Component of a high molecular weight E2F-pocket protein complex, CERC (cyclin E1 repressor complex). Associates with SWI/SNF remodeling complexes containing SMARCA2 and SMARCA4. Interacts with JAK2, SSTR1, SUPT5H, BRAF and with active RAF1. Interacts with LSM11, PRMT7 and SNRPD3. Interacts with COPRS; promoting its recruitment on histone H4. Interacts with CLNS1A/pICln. Identified in a complex with CLNS1A/pICln and Sm proteins. Interacts with RPS10. Interacts with WDR77. Interacts with IWS1. Interacts with CRY1. Interacts with POLR2A. Interacts with SMN1/SMN2. Interacts with LYAR; this interaction is direct. Interacts with TTC5/STRAP; this interaction is DNA damage-dependent and promotes PRMT5 interaction with p53/TP53. Interacts with p53/TP53 in response to DNA damage; the interaction is TTC5/STRAP dependent. Interacts with FAM47E; the interaction is direct, promotes PRMT5 localization to chromatin, and does not disrupt its association with WDR77 or STUB1. Interacts with TDRD6. Interacts with STUB1. Interacts with MBD2. Does not interact with MBD3.

Its subcellular location is the cytoplasm. It is found in the nucleus. It localises to the golgi apparatus. The enzyme catalyses L-arginyl-[protein] + 2 S-adenosyl-L-methionine = N(omega),N(omega)'-dimethyl-L-arginyl-[protein] + 2 S-adenosyl-L-homocysteine + 2 H(+). Activity is increased by EGF, HGF, FGF1 or FGF2 treatments, and slightly decreased by NGF treatment. Arginine methyltransferase that can both catalyze the formation of omega-N monomethylarginine (MMA) and symmetrical dimethylarginine (sDMA), with a preference for the formation of MMA. Specifically mediates the symmetrical dimethylation of arginine residues in the small nuclear ribonucleoproteins Sm D1 (SNRPD1) and Sm D3 (SNRPD3); such methylation being required for the assembly and biogenesis of snRNP core particles. Methylates SUPT5H and may regulate its transcriptional elongation properties. May methylate the N-terminal region of MBD2. Mono- and dimethylates arginine residues of myelin basic protein (MBP) in vitro. May play a role in cytokine-activated transduction pathways. Negatively regulates cyclin E1 promoter activity and cellular proliferation. Methylates histone H2A and H4 'Arg-3' during germ cell development. Methylates histone H3 'Arg-8', which may repress transcription. Methylates the Piwi proteins (PIWIL1, PIWIL2 and PIWIL4), methylation of Piwi proteins being required for the interaction with Tudor domain-containing proteins and subsequent localization to the meiotic nuage. Methylates RPS10. Attenuates EGF signaling through the MAPK1/MAPK3 pathway acting at 2 levels. First, monomethylates EGFR; this enhances EGFR 'Tyr-1197' phosphorylation and PTPN6 recruitment, eventually leading to reduced SOS1 phosphorylation. Second, methylates RAF1 and probably BRAF, hence destabilizing these 2 signaling proteins and reducing their catalytic activity. Required for induction of E-selectin and VCAM-1, on the endothelial cells surface at sites of inflammation. Methylates HOXA9. Methylates and regulates SRGAP2 which is involved in cell migration and differentiation. Acts as a transcriptional corepressor in CRY1-mediated repression of the core circadian component PER1 by regulating the H4R3 dimethylation at the PER1 promoter. Methylates GM130/GOLGA2, regulating Golgi ribbon formation. Methylates H4R3 in genes involved in glioblastomagenesis in a CHTOP- and/or TET1-dependent manner. Symmetrically methylates POLR2A, a modification that allows the recruitment to POLR2A of proteins including SMN1/SMN2 and SETX. This is required for resolving RNA-DNA hybrids created by RNA polymerase II, that form R-loop in transcription terminal regions, an important step in proper transcription termination. Along with LYAR, binds the promoter of gamma-globin HBG1/HBG2 and represses its expression. Symmetrically methylates NCL. Methylates p53/TP53; methylation might possibly affect p53/TP53 target gene specificity. Involved in spliceosome maturation and mRNA splicing in prophase I spermatocytes through the catalysis of the symmetrical arginine dimethylation of SNRPB (small nuclear ribonucleoprotein-associated protein) and the interaction with tudor domain-containing protein TDRD6. The chain is Protein arginine N-methyltransferase 5 (Prmt5) from Mus musculus (Mouse).